The following is a 199-amino-acid chain: Recombination protein RecR (199 aa).

The C4-type zinc-finger motif lies at 57-72 (CSICGNITDEDPCAIC). Residues 80–176 (STILVVEQPK…KVTRLAHGLS (97 aa)) enclose the Toprim domain.

The protein belongs to the RecR family.

Its function is as follows. May play a role in DNA repair. It seems to be involved in an RecBC-independent recombinational process of DNA repair. It may act with RecF and RecO. The chain is Recombination protein RecR from Lacticaseibacillus casei (strain BL23) (Lactobacillus casei).